Reading from the N-terminus, the 456-residue chain is Imidazolonepropionase (456 aa).

2 residues coordinate Fe(3+): His104 and His106. Residues His104 and His106 each contribute to the Zn(2+) site. 4-imidazolone-5-propanoate is bound by residues Arg113, Tyr176, and His209. Tyr176 serves as a coordination point for N-formimidoyl-L-glutamate. Fe(3+) is bound at residue His274. His274 provides a ligand contact to Zn(2+). A 4-imidazolone-5-propanoate-binding site is contributed by Gln277. Residue Asp349 coordinates Fe(3+). Asp349 contacts Zn(2+). 2 residues coordinate N-formimidoyl-L-glutamate: Asn351 and Gly353. Ser354 contacts 4-imidazolone-5-propanoate.

It belongs to the metallo-dependent hydrolases superfamily. HutI family. It depends on Zn(2+) as a cofactor. The cofactor is Fe(3+).

Its subcellular location is the cytoplasm. The catalysed reaction is 4-imidazolone-5-propanoate + H2O = N-formimidoyl-L-glutamate. The protein operates within amino-acid degradation; L-histidine degradation into L-glutamate; N-formimidoyl-L-glutamate from L-histidine: step 3/3. Functionally, catalyzes the hydrolytic cleavage of the carbon-nitrogen bond in imidazolone-5-propanoate to yield N-formimidoyl-L-glutamate. It is the third step in the universal histidine degradation pathway. The polypeptide is Imidazolonepropionase (Verminephrobacter eiseniae (strain EF01-2)).